We begin with the raw amino-acid sequence, 393 residues long: Sulfate adenylyltransferase (393 aa).

The protein belongs to the sulfate adenylyltransferase family.

It catalyses the reaction sulfate + ATP + H(+) = adenosine 5'-phosphosulfate + diphosphate. It functions in the pathway sulfur metabolism; hydrogen sulfide biosynthesis; sulfite from sulfate: step 1/3. The chain is Sulfate adenylyltransferase from Synechococcus sp. (strain JA-3-3Ab) (Cyanobacteria bacterium Yellowstone A-Prime).